We begin with the raw amino-acid sequence, 319 residues long: MPFPNCSAPSTVVATAVGVLLGLECGLGLLGNAVALWTFLFRVRVWKPYAVYLLNLALADLLLAACLPFLAAFYLSLQAWHLGRVGCWALHFLLDLSRSVGMAFLAAVALDRYLRVVHPRLKVNLLSPQAALGVSGLVWLLMVALTCPGLLISEAAQNSTRCHSFYSRADGSFSIIWQEALSCLQFVLPFGLIVFCNAGIIRALQKRLREPEKQPKLQRAQALVTLVVVLFALCFLPCFLARVLMHIFQNLGSCRALCAVAHTSDVTGSLTYLHSVLNPVVYCFSSPTFRSSYRRVFHTLRGKGQAAEPPDFNPRDSYS.

The Extracellular portion of the chain corresponds to 1-16 (MPFPNCSAPSTVVATA). Asn5 is a glycosylation site (N-linked (GlcNAc...) asparagine). Residues 17–37 (VGVLLGLECGLGLLGNAVALW) traverse the membrane as a helical segment. At 38 to 52 (TFLFRVRVWKPYAVY) the chain is on the cytoplasmic side. A helical transmembrane segment spans residues 53 to 73 (LLNLALADLLLAACLPFLAAF). At 74–91 (YLSLQAWHLGRVGCWALH) the chain is on the extracellular side. A helical membrane pass occupies residues 92 to 110 (FLLDLSRSVGMAFLAAVAL). Residues 111–131 (DRYLRVVHPRLKVNLLSPQAA) are Cytoplasmic-facing. The chain crosses the membrane as a helical span at residues 132–152 (LGVSGLVWLLMVALTCPGLLI). Residues 153–180 (SEAAQNSTRCHSFYSRADGSFSIIWQEA) are Extracellular-facing. Residues 181-201 (LSCLQFVLPFGLIVFCNAGII) form a helical membrane-spanning segment. At 202–219 (RALQKRLREPEKQPKLQR) the chain is on the cytoplasmic side. The chain crosses the membrane as a helical span at residues 220–240 (AQALVTLVVVLFALCFLPCFL). The Extracellular portion of the chain corresponds to 241 to 265 (ARVLMHIFQNLGSCRALCAVAHTSD). The chain crosses the membrane as a helical span at residues 266-284 (VTGSLTYLHSVLNPVVYCF). Topologically, residues 285-319 (SSPTFRSSYRRVFHTLRGKGQAAEPPDFNPRDSYS) are cytoplasmic.

It belongs to the G-protein coupled receptor 1 family. In terms of assembly, interacts with KRAS; in a farnesylation-dependent manner.

The protein resides in the cell membrane. In terms of biological role, high-affinity receptor for 12-(S)-hydroxy-5,8,10,14-eicosatetraenoic acid (12-S-HETE), with much lower affinities for other HETE isomers. 12-S-HETE is a eicosanoid, a 12-lipoxygenase (ALOX12) metabolite of arachidonic acid, involved in many physiologic and pathologic processes. 12-S-HETE-binding leads to activation of ERK1/2 (MAPK3/MAPK1), MEK, and NF-kappa-B pathways leading to cell growth. Plays a crucial role for proliferation, survival and macropinocytosis of KRAS-dependent cancer cells by mediating the translocation of KRAS from the endoplasmic reticulum to the plasma membrane (PM) and its association with the PM. Contributes to enhanced immune responses by inducing dendrite protrusion of small intestinal CX3CR1(+) phagocytes for the uptake of luminal antigens. Acts also as a key receptor for 12-(S)-HETE-mediated liver ischemia reperfusion injury. Proton-sensing G protein-coupled receptor. The protein is 12-(S)-hydroxy-5,8,10,14-eicosatetraenoic acid receptor (GPR31) of Homo sapiens (Human).